The following is a 321-amino-acid chain: Gap junction delta-2 protein (321 aa).

The Cytoplasmic portion of the chain corresponds to 1-19 (MGEWTILERLLEAAVQQHS). The helical transmembrane segment at 20–42 (TMIGRILLTVVVIFRILIVAIVG) threads the bilayer. Residues 43–75 (ETVYDDEQTMFVCNTLQPGCNQACYDRAFPISH) are Extracellular-facing. The helical transmembrane segment at 76 to 98 (IRYWVFQIIMVCTPSLCFITYSV) threads the bilayer. Residues 99–197 (HQSAKQRERR…KLRRQEGISR (99 aa)) lie on the Cytoplasmic side of the membrane. Residues 120–141 (PAESIGGPGGTGGGGSGGSKRE) form a disordered region. The segment covering 125 to 137 (GGPGGTGGGGSGG) has biased composition (gly residues). Residues 198 to 220 (FYIIQVVFRNALEIGFLVGQYFL) form a helical membrane-spanning segment. Topologically, residues 221–252 (YGFSVPGLYECNRYPCIKEVECYVSRPTEKTV) are extracellular. A helical membrane pass occupies residues 253–275 (FLVFMFAVSGICVVLNLAELNHL). Over 276 to 321 (GWRKIKLAVRGAQAKRKSVYEIRNKDLPRVSVPNFGRTQSSDSAYV) the chain is Cytoplasmic.

It belongs to the connexin family. Delta-type subfamily. In terms of assembly, a connexon is composed of a hexamer of connexins. As to expression, highly expressed in neurons.

Its subcellular location is the cell membrane. It is found in the cell junction. The protein localises to the gap junction. In terms of biological role, one gap junction consists of a cluster of closely packed pairs of transmembrane channels, the connexons, through which materials of low MW diffuse from one cell to a neighboring cell. This chain is Gap junction delta-2 protein (Gjd2), found in Mus musculus (Mouse).